A 193-amino-acid polypeptide reads, in one-letter code: Ancillary SecYEG translocon subunit (193 aa).

Residues 1–11 (MIKNSYINEKL) lie on the Cytoplasmic side of the membrane. Residues 12–34 (NFYQKSFLTCMLLIVIVIVYFFS) traverse the membrane as a helical segment. The Extracellular portion of the chain corresponds to 35–193 (KNYLDKPKNS…IIQMKINNYN (159 aa)).

It belongs to the YfgM family. In terms of assembly, interacts with the Sec translocon. Forms a complex with PpiD.

It localises to the cell membrane. May mediate protein transfer from the Sec translocon to the chaperone network via its extracellular C-terminal region. This is Ancillary SecYEG translocon subunit from Buchnera aphidicola subsp. Baizongia pistaciae (strain Bp).